The chain runs to 1855 residues: Unconventional myosin-Va (1855 aa).

Residue alanine 2 is modified to N-acetylalanine. One can recognise a Myosin N-terminal SH3-like domain in the interval 8 to 60 (TKFARVWIPDPEEVWKSAELLKDYKPGDKVLLLHLEEGKDLEYHLDPKTKELP). The region spanning 69–763 (VGENDLTALS…QVAYLEKLRA (695 aa)) is the Myosin motor domain. An ATP-binding site is contributed by 163 to 170 (GESGAGKT). Residues 598–631 (AISPTSATSSGRTPLTRTPAKPTKGRPGQMAKEH) form a disordered region. Serine 600 carries the phosphoserine modification. The segment covering 600–613 (SPTSATSSGRTPLT) has biased composition (polar residues). Positions 643–665 (LHLLMETLNATTPHYVRCIKPND) are actin-binding. IQ domains lie at 766 to 788 (LRAA…KYLR), 789 to 818 (MRKA…TKAA), 814 to 836 (RTKA…RYKI), 837 to 861 (RRAA…RKIL), 862 to 883 (REHK…THYK), and 885 to 914 (SMHA…EARS). 2 coiled-coil regions span residues 914–1237 (SVER…APEV) and 1338–1445 (VYEG…ELEV). Residue threonine 1032 is modified to Phosphothreonine. Serine 1452 and serine 1652 each carry phosphoserine. Residues 1534 to 1810 (TSTINSIKKV…IRTIQMRLRD (277 aa)) form the Dilute domain. Threonine 1760 is modified (phosphothreonine).

The protein belongs to the TRAFAC class myosin-kinesin ATPase superfamily. Myosin family. As to quaternary structure, may be a homodimer, which associates with multiple calmodulin or myosin light chains. Interacts with RIPL2, the interaction is required for its role in dendrite formation. Interacts with MLPH. Interacts with SYTL4. Interacts with MYRIP. Interacts with RAB10; mediates the transport to the plasma membrane of SLC2A4/GLUT4 storage vesicles. Interacts with FMR1; this interaction occurs in association with polyribosome. As to expression, detected in melanocytes.

It carries out the reaction ATP + H2O = ADP + phosphate + H(+). In terms of biological role, processive actin-based motor that can move in large steps approximating the 36-nm pseudo-repeat of the actin filament. Can hydrolyze ATP in the presence of actin, which is essential for its function as a motor protein. Involved in melanosome transport. Also mediates the transport of vesicles to the plasma membrane. May also be required for some polarization process involved in dendrite formation. The chain is Unconventional myosin-Va (MYO5A) from Homo sapiens (Human).